We begin with the raw amino-acid sequence, 315 residues long: Protein MFI (315 aa).

In terms of assembly, can homodimerize. Interacts with MFF; the interaction inhibits MFF interaction with DNM1L. Enriched in the pancreatic beta cell and the testis and is expressed at low levels in other tissues tested.

The protein resides in the cytoplasm. It localises to the cytosol. It is found in the mitochondrion outer membrane. Its function is as follows. Acts as an inhibitor of mitochondrial fission. Interacts with MFF and prevents DNM1L recruitment to mitochondria, promoting a more fused mitochondrial network. This chain is Protein MFI, found in Mus musculus (Mouse).